A 364-amino-acid chain; its full sequence is UDP-N-acetylglucosamine--N-acetylmuramyl-(pentapeptide) pyrophosphoryl-undecaprenol N-acetylglucosamine transferase (364 aa).

Residues 15 to 17, asparagine 123, arginine 164, serine 191, and glutamine 286 contribute to the UDP-N-acetyl-alpha-D-glucosamine site; that span reads TGG.

The protein belongs to the glycosyltransferase 28 family. MurG subfamily.

Its subcellular location is the cell inner membrane. It carries out the reaction di-trans,octa-cis-undecaprenyl diphospho-N-acetyl-alpha-D-muramoyl-L-alanyl-D-glutamyl-meso-2,6-diaminopimeloyl-D-alanyl-D-alanine + UDP-N-acetyl-alpha-D-glucosamine = di-trans,octa-cis-undecaprenyl diphospho-[N-acetyl-alpha-D-glucosaminyl-(1-&gt;4)]-N-acetyl-alpha-D-muramoyl-L-alanyl-D-glutamyl-meso-2,6-diaminopimeloyl-D-alanyl-D-alanine + UDP + H(+). Its pathway is cell wall biogenesis; peptidoglycan biosynthesis. Its function is as follows. Cell wall formation. Catalyzes the transfer of a GlcNAc subunit on undecaprenyl-pyrophosphoryl-MurNAc-pentapeptide (lipid intermediate I) to form undecaprenyl-pyrophosphoryl-MurNAc-(pentapeptide)GlcNAc (lipid intermediate II). This is UDP-N-acetylglucosamine--N-acetylmuramyl-(pentapeptide) pyrophosphoryl-undecaprenol N-acetylglucosamine transferase from Prochlorococcus marinus (strain MIT 9515).